Reading from the N-terminus, the 357-residue chain is UDP-N-acetylglucosamine--N-acetylmuramyl-(pentapeptide) pyrophosphoryl-undecaprenol N-acetylglucosamine transferase (357 aa).

UDP-N-acetyl-alpha-D-glucosamine contacts are provided by residues 13–15 (TGG), Asn125, Arg161, Ser189, Ile243, and Gln288.

This sequence belongs to the glycosyltransferase 28 family. MurG subfamily.

It is found in the cell inner membrane. It catalyses the reaction di-trans,octa-cis-undecaprenyl diphospho-N-acetyl-alpha-D-muramoyl-L-alanyl-D-glutamyl-meso-2,6-diaminopimeloyl-D-alanyl-D-alanine + UDP-N-acetyl-alpha-D-glucosamine = di-trans,octa-cis-undecaprenyl diphospho-[N-acetyl-alpha-D-glucosaminyl-(1-&gt;4)]-N-acetyl-alpha-D-muramoyl-L-alanyl-D-glutamyl-meso-2,6-diaminopimeloyl-D-alanyl-D-alanine + UDP + H(+). Its pathway is cell wall biogenesis; peptidoglycan biosynthesis. Functionally, cell wall formation. Catalyzes the transfer of a GlcNAc subunit on undecaprenyl-pyrophosphoryl-MurNAc-pentapeptide (lipid intermediate I) to form undecaprenyl-pyrophosphoryl-MurNAc-(pentapeptide)GlcNAc (lipid intermediate II). The polypeptide is UDP-N-acetylglucosamine--N-acetylmuramyl-(pentapeptide) pyrophosphoryl-undecaprenol N-acetylglucosamine transferase (Bordetella petrii (strain ATCC BAA-461 / DSM 12804 / CCUG 43448)).